The sequence spans 455 residues: MAETKEQTDDVETLMASLDQLGMEADPTSKEFNNDDSKIGAPSEVQDEKELLEFLDQLENDEEKNEKNPIEEANEENESVAATSNERQQHDASNQPSQAAQTTINKNTESATPKTVNEINKSQEFQEHVETPKQSNWLGGFWSTASAAVRSAEQRVRSIKGFEENANWDINVRNMVDLNKLGDLSNGIRSKALPTLSNTIHNVLNVVAPPIHDHEVLQVTVFHDLAGFAHLDRIVYESFEKVMFQVEGGELTVLLDKEAKVRPRTNDVYEDFGLCNGYLEAKKLAKANLAEPITEAKKMNKENKQENVGAGDDEDASESPMVRVTHLLLVIQAFTIKNKEVSDDEQLCFLIHLNDTNHNLEFSTTSQPLPLEWQRWAVDPRYIKLFGSNAILPNEWVTEWVEQSISVAAGIVAQMYTSKRMALGDPSLFAGLPEEDVNTGSSETPVPYYDGAMYA.

Disordered stretches follow at residues 1–113 (MAET…SATP) and 296–317 (AKKM…EDAS). Basic and acidic residues predominate over residues 27–38 (PTSKEFNNDDSK). The segment covering 80–113 (VAATSNERQQHDASNQPSQAAQTTINKNTESATP) has biased composition (polar residues). Residues 296-305 (AKKMNKENKQ) show a composition bias toward basic and acidic residues.

It belongs to the MTC1 family.

It localises to the cytoplasm. Its function is as follows. Involved in telomere capping. This Schizosaccharomyces pombe (strain 972 / ATCC 24843) (Fission yeast) protein is Maintenance of telomere capping protein 1.